The sequence spans 211 residues: N-(5'-phosphoribosyl)anthranilate isomerase (211 aa).

The protein belongs to the TrpF family.

It carries out the reaction N-(5-phospho-beta-D-ribosyl)anthranilate = 1-(2-carboxyphenylamino)-1-deoxy-D-ribulose 5-phosphate. It functions in the pathway amino-acid biosynthesis; L-tryptophan biosynthesis; L-tryptophan from chorismate: step 3/5. This Pseudomonas aeruginosa (strain UCBPP-PA14) protein is N-(5'-phosphoribosyl)anthranilate isomerase.